Consider the following 714-residue polypeptide: MSAILNNYQYIPNNSLNSNNSNNGNNSTILSLCDNATQLMDIIMREFNEPIFDYNQNSSEINKSLVKTIKSLLETLTKNLNNINNNINNNISNNNNNNNNNNNNNNNNNNNNNNINNNNNFNTPQIIINDNYKLYTPPPAPMLKGLSCEVPFETMEYMQPLDLSNNNISLNNSCNMINNDNNNNNNNNNNNNNNNNNNNNQQQQFYNAPSSNSTPSHSSPSSPTTSSIPFHPNFTLSQDNFNQQLQNNNNSNNNSNNNNNNNIINNNFLQNSQQTNQSLQFSTTQPNLNNFYDIPKQPIICSSPIVNIPPPFYLDGSIDPVENIDWKRTKISDFNFYGSLGSGSFGTAKLCRHRGSGLFFCSKTLRRETIVHEKHKEHVNNEINIMLNISHPYIVKTYSTFNTPTKIHFIMEYAGKKDLFHHLRANKCFTEQTTKLIVAEIVLAIEYLHAENIIYRDLKPENILIDEKGHIKLTDFGFSKKTVGGKNTSSVCGTFDYMAPEILNSSNGHGKPVDWWALGVVVYELVTGKLPFSNSKESLLNRKADFQLIFQNSYLSDEIKDFIFQLLSVDPSKRLGTFDSCSIRNHKWFSDINWLHLESKYQIDGPLSTLNSFINCDFNINLLKKSKSYTEQQQQQQQLPQQQQQQQQNNQLFNQTLQQQNFNFHPIQPQQQQQQQFFNFQFNNNNFNNNNNNNNNFNEACTSNTCGGTTASIF.

Disordered regions lie at residues 88-122 (NNNI…NNFN) and 174-266 (CNMI…IINN). 3 stretches are compositionally biased toward low complexity: residues 174-200 (CNMI…NNNN), 209-227 (PSSN…TTSS), and 240-266 (NFNQ…IINN). One can recognise a Protein kinase domain in the interval 334–589 (FNFYGSLGSG…SCSIRNHKWF (256 aa)). Residues 340 to 348 (LGSGSFGTA) and Lys-363 contribute to the ATP site. Residue Asp-457 is the Proton acceptor of the active site. Residue Thr-488 is modified to Phosphothreonine.

Belongs to the protein kinase superfamily. AGC Ser/Thr protein kinase family.

It carries out the reaction L-seryl-[protein] + ATP = O-phospho-L-seryl-[protein] + ADP + H(+). It catalyses the reaction L-threonyl-[protein] + ATP = O-phospho-L-threonyl-[protein] + ADP + H(+). This chain is Developmentally-regulated protein kinase 1 (pkaD), found in Dictyostelium discoideum (Social amoeba).